Reading from the N-terminus, the 323-residue chain is GTP 3',8-cyclase (323 aa).

A Radical SAM core domain is found at 5–228 (GFGRKVDYLR…TVLRDTSSPA (224 aa)). GTP is bound at residue Arg14. 2 residues coordinate [4Fe-4S] cluster: Cys21 and Cys25. Tyr27 contacts S-adenosyl-L-methionine. Cys28 contributes to the [4Fe-4S] cluster binding site. Arg64 serves as a coordination point for GTP. Gly68 serves as a coordination point for S-adenosyl-L-methionine. Thr95 contacts GTP. An S-adenosyl-L-methionine-binding site is contributed by Ser119. Lys155 is a GTP binding site. Met189 contributes to the S-adenosyl-L-methionine binding site. The [4Fe-4S] cluster site is built by Cys250 and Cys253. 255–257 (RIR) lines the GTP pocket. Cys267 contacts [4Fe-4S] cluster. A compositionally biased stretch (basic and acidic residues) spans 302 to 313 (KNKWSQKDDNEV). The tract at residues 302–323 (KNKWSQKDDNEVSTRAFYQTGG) is disordered.

Belongs to the radical SAM superfamily. MoaA family. In terms of assembly, monomer and homodimer. The cofactor is [4Fe-4S] cluster.

It carries out the reaction GTP + AH2 + S-adenosyl-L-methionine = (8S)-3',8-cyclo-7,8-dihydroguanosine 5'-triphosphate + 5'-deoxyadenosine + L-methionine + A + H(+). It functions in the pathway cofactor biosynthesis; molybdopterin biosynthesis. In terms of biological role, catalyzes the cyclization of GTP to (8S)-3',8-cyclo-7,8-dihydroguanosine 5'-triphosphate. In Aliarcobacter butzleri (strain RM4018) (Arcobacter butzleri), this protein is GTP 3',8-cyclase.